Here is a 407-residue protein sequence, read N- to C-terminus: Probable NADPH dehydrogenase (407 aa).

FMN is bound by residues threonine 49 and glutamine 124. The Proton donor role is filled by tyrosine 206. FMN contacts are provided by arginine 254 and arginine 357.

Belongs to the NADH:flavin oxidoreductase/NADH oxidase family. Requires FMN as cofactor.

It carries out the reaction A + NADPH + H(+) = AH2 + NADP(+). Its function is as follows. Oxidoreductase that binds mammalian estrogens with high affinity. The protein is Probable NADPH dehydrogenase of Candida albicans (strain SC5314 / ATCC MYA-2876) (Yeast).